Consider the following 342-residue polypeptide: Probable endoglucanase (342 aa).

An N-terminal signal peptide occupies residues 1-20 (MSVMAAMGGAQVLSSTGAFA). The Proton donor role is filled by glutamate 57. Aspartate 114 acts as the Nucleophile in catalysis.

Belongs to the glycosyl hydrolase 8 (cellulase D) family.

It localises to the secreted. It catalyses the reaction Endohydrolysis of (1-&gt;4)-beta-D-glucosidic linkages in cellulose, lichenin and cereal beta-D-glucans.. Functionally, enzyme capable of hydrolyzing carboxy-methyl-cellulose (CMC). This chain is Probable endoglucanase (cmcAX), found in Novacetimonas hansenii (Komagataeibacter hansenii).